The chain runs to 757 residues: MDVNPTLLFLKVPAQNAISTTFPYTGDPPYSHGTGTGYTMDTVNRTHQYSERGKWTTNTETGAPQLNPIDGPLPEDNEPSGYAQTDCVLEAMAFLEESHPGIFENSCLETMEVVQQTRVDKLTQGRQTYDWTLNRNQPAATALANTIEVFRSNGLTANESGRLIDFLKDVMESMDKEEMEITTHFQRKRRVRDNMTKRMVTQRTIGKKKQRLNKRSYLIRALTLNTMTKDAERGKLKRRAIATPGMQIRGFVYFVEALARSICEKLEQSGLPVGGNEKKAKLANVVRKMMTNSQDTELSFTITGDNTKWNENQNPRMFLAMITYITRNQPKWFRNVLSIAPIMFSNKMARLGKGYMFESKSMKLRTQIPAEMLATIDLKYFNDSTRKKIEKIRPLLIDGTASLSPGMMMGMFNMLSTVLGVSILNLGQKRYTKTTYWWDGLQSSDDFALIVNAPNHEGIQAGVDRFYRTCKLVGINMSKKKSYINRTGTFEFTSFFYRYGFVANFSMELPSFGVSGINESADMSIGVTVIKNNMINNDLGPATAQMALQLFIKDYRYTYRCHRGDTQIQTRRSFEIKKLWEQTRSKAGLLVSDGGPNLYNIRNLHIPEVCLKWELMDEDYQGRLCNPLNPFVSHKEIESVNNAVVMPAHGPAKSMEYDAVATTHSWIPKRNRSILNTSQRGILEDEQMYQKCCNLFEKFFPSSSYRRPVGISSMVEAMVSRARIDARIDFESGRIKKEEFAEIMKICSTIEELRRQK.

Residues 52 to 82 form a disordered region; the sequence is RGKWTTNTETGAPQLNPIDGPLPEDNEPSGY. Residues 55–64 show a composition bias toward polar residues; it reads WTTNTETGAP. 2 short sequence motifs (nuclear localization signal) span residues 187–195 and 203–216; these read RKRRVRDNM and RTIG…NKRS. Residues 249–256 form a promoter-binding site region; sequence RGFVYFVE. A RdRp catalytic domain is found at 286–483; sequence VRKMMTNSQD…GINMSKKKSY (198 aa).

This sequence belongs to the influenza viruses polymerase PB1 family. In terms of assembly, influenza RNA polymerase is composed of three subunits: PB1, PB2 and PA. Interacts (via N-terminus) with PA (via C-terminus). Interacts (via C-terminus) with PB2 (via N-terminus); this interaction is essential for transcription initiation. Post-translationally, phosphorylated by host PRKCA.

It localises to the host nucleus. The protein localises to the host cytoplasm. The enzyme catalyses RNA(n) + a ribonucleoside 5'-triphosphate = RNA(n+1) + diphosphate. Functionally, RNA-dependent RNA polymerase which is responsible for replication and transcription of virus RNA segments. The transcription of viral mRNAs occurs by a unique mechanism called cap-snatching. 5' methylated caps of cellular mRNAs are cleaved after 10-13 nucleotides by PA. In turn, these short capped RNAs are used as primers by PB1 for transcription of viral mRNAs. During virus replication, PB1 initiates RNA synthesis and copy vRNA into complementary RNA (cRNA) which in turn serves as a template for the production of more vRNAs. This Aves protein is RNA-directed RNA polymerase catalytic subunit.